Reading from the N-terminus, the 399-residue chain is Glutathione S-transferase LANCL1 (399 aa).

Position 2 is an N-acetylalanine (alanine 2). The residue at position 142 (lysine 142) is an N6-acetyllysine. Position 276 (cysteine 276) interacts with Zn(2+). Residue lysine 317 participates in glutathione binding. Cysteine 322 and histidine 323 together coordinate Zn(2+). Arginine 364–aspartate 367 contributes to the glutathione binding site.

This sequence belongs to the LanC-like protein family. Interacts with the C-terminal of STOM. Interacts with the EPS8 SH3 domain. Interaction with EPS8 is inhibited by glutathione binding. Detected in spinal cord (at protein level). Ubiquitous. Strongly expressed in brain, testis, alveolar macrophages and epithelial cells of the lung, kidney and intestine. Expression in brain increases during the first postnatal month and remaining high in adult.

Its subcellular location is the cytoplasm. The protein resides in the cell membrane. The enzyme catalyses RX + glutathione = an S-substituted glutathione + a halide anion + H(+). It carries out the reaction 1-chloro-2,4-dinitrobenzene + glutathione = 2,4-dinitrophenyl-S-glutathione + chloride + H(+). In terms of biological role, functions as a glutathione transferase. Catalyzes conjugation of the glutathione (GSH) to artificial substrates 1-chloro-2,4-dinitrobenzene (CDNB) and p-nitrophenyl acetate. Mitigates neuronal oxidative stress during normal postnatal development and in response to oxidative stresses probably through GSH antioxidant defense mechanism. May play a role in EPS8 signaling. Binds glutathione. This chain is Glutathione S-transferase LANCL1, found in Mus musculus (Mouse).